Consider the following 62-residue polypeptide: DNA-directed RNA polymerase subunit Rpo10 (62 aa).

Zn(2+)-binding residues include Cys-6, Cys-9, Cys-43, and Cys-44.

It belongs to the archaeal Rpo10/eukaryotic RPB10 RNA polymerase subunit family. As to quaternary structure, part of the RNA polymerase complex. The cofactor is Zn(2+).

Its subcellular location is the cytoplasm. It carries out the reaction RNA(n) + a ribonucleoside 5'-triphosphate = RNA(n+1) + diphosphate. DNA-dependent RNA polymerase (RNAP) catalyzes the transcription of DNA into RNA using the four ribonucleoside triphosphates as substrates. The polypeptide is DNA-directed RNA polymerase subunit Rpo10 (Methanococcoides burtonii (strain DSM 6242 / NBRC 107633 / OCM 468 / ACE-M)).